Consider the following 373-residue polypeptide: Sorting nexin-21 (373 aa).

The tract at residues 1–107 (MHRGTQEGAM…RSPPPDGQWG (107 aa)) is disordered. Positions 21 to 37 (ALAGDGPGEAAASPEAE) are enriched in low complexity. Residues 55–65 (SRLSGTLSFTS) are compositionally biased toward polar residues. Over residues 66 to 81 (AEDDEDDEDEDDEEAG) the composition is skewed to acidic residues. In terms of domain architecture, PX spans 129–246 (QRLLFEVTSA…DFFVLPELRR (118 aa)). The a 1,2-diacyl-sn-glycero-3-phospho-(1D-myo-inositol-3-phosphate) site is built by R171, S173, K198, and R212.

This sequence belongs to the sorting nexin family. Monomer. As to expression, highly expressed in fetus liver, but only weakly expressed in brain, skeleton muscle, smooth muscle, and cardiac muscle, kidney, and adrenal gland.

The protein localises to the cytoplasmic vesicle membrane. Its subcellular location is the early endosome membrane. In terms of biological role, binds to membranes enriched in phosphatidylinositol 3-phosphate (PtdIns(P3)) and phosphatidylinositol 4,5-bisphosphate. May be involved in several stages of intracellular trafficking. This Homo sapiens (Human) protein is Sorting nexin-21 (SNX21).